The sequence spans 382 residues: Galactokinase (382 aa).

34 to 37 (EHTD) provides a ligand contact to substrate. 124–130 (GAGLSSS) lines the ATP pocket. Residues serine 130 and glutamate 162 each contribute to the Mg(2+) site. Residue aspartate 174 is the Proton acceptor of the active site. Residue tyrosine 223 coordinates substrate.

The protein belongs to the GHMP kinase family. GalK subfamily.

It localises to the cytoplasm. It carries out the reaction alpha-D-galactose + ATP = alpha-D-galactose 1-phosphate + ADP + H(+). Its pathway is carbohydrate metabolism; galactose metabolism. Catalyzes the transfer of the gamma-phosphate of ATP to D-galactose to form alpha-D-galactose-1-phosphate (Gal-1-P). This chain is Galactokinase, found in Escherichia fergusonii (strain ATCC 35469 / DSM 13698 / CCUG 18766 / IAM 14443 / JCM 21226 / LMG 7866 / NBRC 102419 / NCTC 12128 / CDC 0568-73).